We begin with the raw amino-acid sequence, 146 residues long: Ribosome maturation factor RimP (146 aa).

The protein belongs to the RimP family.

It localises to the cytoplasm. In terms of biological role, required for maturation of 30S ribosomal subunits. This chain is Ribosome maturation factor RimP, found in Helicobacter pylori (strain Shi470).